Here is a 106-residue protein sequence, read N- to C-terminus: Small ribosomal subunit protein uS10 (106 aa).

Belongs to the universal ribosomal protein uS10 family. In terms of assembly, part of the 30S ribosomal subunit.

In terms of biological role, involved in the binding of tRNA to the ribosomes. This chain is Small ribosomal subunit protein uS10, found in Caldicellulosiruptor saccharolyticus (strain ATCC 43494 / DSM 8903 / Tp8T 6331).